The sequence spans 671 residues: uncharacterized protein (671 aa).

A helical transmembrane segment spans residues 39–56; the sequence is ATVTVVILLLILLLGWGY.

It is found in the membrane. This is an uncharacterized protein from Treponema pallidum (strain Nichols).